Reading from the N-terminus, the 105-residue chain is Large ribosomal subunit protein eL30 (105 aa).

The protein belongs to the eukaryotic ribosomal protein eL30 family.

The sequence is that of Large ribosomal subunit protein eL30 (RPL30) from Eremothecium gossypii (strain ATCC 10895 / CBS 109.51 / FGSC 9923 / NRRL Y-1056) (Yeast).